Here is a 157-residue protein sequence, read N- to C-terminus: Crossover junction endodeoxyribonuclease RuvC (157 aa).

Active-site residues include D7, E66, and D139. D7, E66, and D139 together coordinate Mg(2+).

Belongs to the RuvC family. As to quaternary structure, homodimer which binds Holliday junction (HJ) DNA. The HJ becomes 2-fold symmetrical on binding to RuvC with unstacked arms; it has a different conformation from HJ DNA in complex with RuvA. In the full resolvosome a probable DNA-RuvA(4)-RuvB(12)-RuvC(2) complex forms which resolves the HJ. Requires Mg(2+) as cofactor.

Its subcellular location is the cytoplasm. The enzyme catalyses Endonucleolytic cleavage at a junction such as a reciprocal single-stranded crossover between two homologous DNA duplexes (Holliday junction).. The RuvA-RuvB-RuvC complex processes Holliday junction (HJ) DNA during genetic recombination and DNA repair. Endonuclease that resolves HJ intermediates. Cleaves cruciform DNA by making single-stranded nicks across the HJ at symmetrical positions within the homologous arms, yielding a 5'-phosphate and a 3'-hydroxyl group; requires a central core of homology in the junction. The consensus cleavage sequence is 5'-(A/T)TT(C/G)-3'. Cleavage occurs on the 3'-side of the TT dinucleotide at the point of strand exchange. HJ branch migration catalyzed by RuvA-RuvB allows RuvC to scan DNA until it finds its consensus sequence, where it cleaves and resolves the cruciform DNA. The protein is Crossover junction endodeoxyribonuclease RuvC of Helicobacter pylori (strain P12).